Here is a 149-residue protein sequence, read N- to C-terminus: Macrodomain Ter protein (149 aa).

Belongs to the MatP family. Homodimer.

The protein localises to the cytoplasm. Required for spatial organization of the terminus region of the chromosome (Ter macrodomain) during the cell cycle. Prevents early segregation of duplicated Ter macrodomains during cell division. Binds specifically to matS, which is a 13 bp signature motif repeated within the Ter macrodomain. This Vibrio vulnificus (strain CMCP6) protein is Macrodomain Ter protein.